Here is a 207-residue protein sequence, read N- to C-terminus: Ras-related protein Rab-8B (207 aa).

GTP-binding residues include S17, G18, V19, G20, K21, T22, C23, T35, S39, and T40. T22 lines the Mg(2+) pocket. 2 consecutive short sequence motifs (switch) follow at residues 31-45 (DAFN…GIDF) and 63-80 (DTAG…YYRG). The Mg(2+) site is built by T40 and D63. G66 is a binding site for GTP. At T72 the chain carries Phosphothreonine; by LRRK2. 5 residues coordinate GTP: N121, K122, D124, A152, and K153. 2 positions are modified to phosphoserine: S180 and S183. C204 carries the post-translational modification Cysteine methyl ester. The S-geranylgeranyl cysteine moiety is linked to residue C204. Positions 205–207 (SLL) are cleaved as a propeptide — removed in mature form.

Belongs to the small GTPase superfamily. Rab family. Associated with actin, delta-catenin and alpha and beta tubulins. Interacts with OTOF. Interacts with PEX5R. Interacts with RAB3IP. Interacts with VIM. Interacts with CDH1. Interacts with MICALL2. Interacts with GDI1, GDI2, CHML and CHM; phosphorylation at Thr-72 disrupts these interactions. Interacts with MICAL1. Requires Mg(2+) as cofactor. Phosphorylation of Thr-72 in the switch II region by LRRK2 prevents the association of RAB regulatory proteins, including CHM, CHML and RAB GDP dissociation inhibitors GDI1 and GDI2.

Its subcellular location is the cell membrane. The protein resides in the cytoplasmic vesicle. It is found in the phagosome membrane. It localises to the endosome membrane. It catalyses the reaction GTP + H2O = GDP + phosphate + H(+). With respect to regulation, regulated by guanine nucleotide exchange factors (GEFs) including RAB3IP/RABIN8 which promotes the exchange of bound GDP for free GTP. Regulated by GTPase activating proteins (GAPs) which increase the GTP hydrolysis activity. Inhibited by GDP dissociation inhibitors (GDIs). The small GTPases Rab are key regulators of intracellular membrane trafficking, from the formation of transport vesicles to their fusion with membranes. Rabs cycle between an inactive GDP-bound form and an active GTP-bound form that is able to recruit to membranes different sets of downstream effectors directly responsible for vesicle formation, movement, tethering and fusion. RAB8B may be involved in polarized vesicular trafficking and neurotransmitter release. May participate in cell junction dynamics in Sertoli cells. May also participate in the export of a subset of neosynthesized proteins through a Rab8-Rab10-Rab11-dependent endososomal export route. The polypeptide is Ras-related protein Rab-8B (Mus musculus (Mouse)).